Reading from the N-terminus, the 494-residue chain is uncharacterized protein (494 aa).

One can recognise a 2Fe-2S ferredoxin-type domain in the interval 4–82 (FTITVKKTEG…NMIIEPLEGF (79 aa)). [2Fe-2S] cluster contacts are provided by cysteine 46, cysteine 51, cysteine 54, and cysteine 66. 2 consecutive 4Fe-4S ferredoxin-type domains span residues 127 to 157 (DLKD…NYPG) and 178 to 208 (EKEA…IVHN). The [4Fe-4S] cluster site is built by cysteine 137, cysteine 140, cysteine 143, cysteine 147, cysteine 189, cysteine 192, cysteine 195, and cysteine 199.

It belongs to the succinate dehydrogenase/fumarate reductase iron-sulfur protein family.

This is an uncharacterized protein from Methanococcus maripaludis (strain DSM 14266 / JCM 13030 / NBRC 101832 / S2 / LL).